A 115-amino-acid polypeptide reads, in one-letter code: Ig heavy chain V-III region W3082 (115 aa).

The region spanning 1 to 114 (EVKLEESGGG…WGQGTLVTVS (114 aa)) is the Ig-like domain. A disulfide bridge links Cys-22 with Cys-98.

In Mus musculus (Mouse), this protein is Ig heavy chain V-III region W3082.